The following is a 427-amino-acid chain: UPF0229 protein YeaH (427 aa).

The segment covering 79–90 (NDHFIQNDRIER) has biased composition (basic and acidic residues). Residues 79–110 (NDHFIQNDRIERPQGGGGGSGSGQGQASQDGE) form a disordered region. A compositionally biased stretch (gly residues) spans 92 to 102 (QGGGGGSGSGQ).

The protein belongs to the UPF0229 family.

The protein is UPF0229 protein YeaH of Salmonella paratyphi B (strain ATCC BAA-1250 / SPB7).